Here is a 49-residue protein sequence, read N- to C-terminus: Isoflavone reductase homolog 2 (49 aa).

5–11 (GGTGYIG) is a binding site for NADP(+).

The protein belongs to the NmrA-type oxidoreductase family. Isoflavone reductase subfamily.

Its subcellular location is the cytoplasm. The polypeptide is Isoflavone reductase homolog 2 (Pseudotsuga menziesii (Douglas-fir)).